Reading from the N-terminus, the 248-residue chain is UPF0246 protein RF_0769 (248 aa).

Belongs to the UPF0246 family.

The polypeptide is UPF0246 protein RF_0769 (Rickettsia felis (strain ATCC VR-1525 / URRWXCal2) (Rickettsia azadi)).